A 440-amino-acid chain; its full sequence is Protein root UVB sensitive 3 (440 aa).

The next 3 helical transmembrane spans lie at 109 to 129 (IGAT…GILF), 154 to 174 (IGML…VVVC), and 232 to 252 (FTSG…VFHM).

The protein belongs to the RUS1 family.

It is found in the membrane. The protein is Protein root UVB sensitive 3 of Arabidopsis thaliana (Mouse-ear cress).